The sequence spans 1032 residues: UPF0182 protein sll1060 (1032 aa).

Helical transmembrane passes span 27-49 (WVKG…RIYV), 69-87 (WQGS…FIVF), 144-166 (VLLP…YVFI), 197-219 (FSGM…IGVL), 226-248 (PGLV…FRLL), 283-300 (WWRG…LIIL), 321-339 (HISA…EHWL), 364-386 (LPVE…WLSV), and 406-428 (IIGL…LGGW).

Belongs to the UPF0182 family.

It is found in the cell membrane. The protein is UPF0182 protein sll1060 of Synechocystis sp. (strain ATCC 27184 / PCC 6803 / Kazusa).